We begin with the raw amino-acid sequence, 193 residues long: Ion-translocating oxidoreductase complex subunit A (193 aa).

A run of 6 helical transmembrane segments spans residues 4–24 (FLLL…QFLG), 39–59 (IGMS…SYLV), 63–83 (ILLP…VIAV), 102–122 (LLGI…VALL), 134–154 (VIYG…FAAM), and 171–191 (SISM…TGLV).

The protein belongs to the NqrDE/RnfAE family. As to quaternary structure, the complex is composed of six subunits: RnfA, RnfB, RnfC, RnfD, RnfE and RnfG.

Its subcellular location is the cell inner membrane. Part of a membrane-bound complex that couples electron transfer with translocation of ions across the membrane. This chain is Ion-translocating oxidoreductase complex subunit A, found in Pseudoalteromonas atlantica (strain T6c / ATCC BAA-1087).